A 429-amino-acid chain; its full sequence is Gamma-glutamyl phosphate reductase (429 aa).

Belongs to the gamma-glutamyl phosphate reductase family.

It localises to the cytoplasm. It carries out the reaction L-glutamate 5-semialdehyde + phosphate + NADP(+) = L-glutamyl 5-phosphate + NADPH + H(+). Its pathway is amino-acid biosynthesis; L-proline biosynthesis; L-glutamate 5-semialdehyde from L-glutamate: step 2/2. Functionally, catalyzes the NADPH-dependent reduction of L-glutamate 5-phosphate into L-glutamate 5-semialdehyde and phosphate. The product spontaneously undergoes cyclization to form 1-pyrroline-5-carboxylate. In Bradyrhizobium sp. (strain ORS 278), this protein is Gamma-glutamyl phosphate reductase.